A 567-amino-acid polypeptide reads, in one-letter code: Zinc finger protein 512 (567 aa).

Residues methionine 1–glutamine 34 are disordered. Glycyl lysine isopeptide (Lys-Gly) (interchain with G-Cter in SUMO2) cross-links involve residues lysine 18 and lysine 84. The interval alanine 87–proline 148 is disordered. Basic residues predominate over residues lysine 119–proline 130. The C2H2-type 1 zinc-finger motif lies at phenylalanine 197 to histidine 220. Residue lysine 227 forms a Glycyl lysine isopeptide (Lys-Gly) (interchain with G-Cter in SUMO2) linkage. The C2H2-type 2 zinc-finger motif lies at leucine 287–histidine 310. Lysine 333 participates in a covalent cross-link: Glycyl lysine isopeptide (Lys-Gly) (interchain with G-Cter in SUMO2). The C2H2-type 3; atypical zinc finger occupies isoleucine 406–cysteine 430. A C2H2-type 3 zinc finger spans residues tyrosine 440–histidine 463. Residues lysine 485–arginine 494 show a composition bias toward basic and acidic residues. Residues lysine 485–lysine 567 form a disordered region. Positions arginine 495–glutamine 508 are enriched in basic residues. Residues valine 523–glutamate 544 are compositionally biased toward basic and acidic residues. Over residues arginine 556 to lysine 567 the composition is skewed to basic residues.

This sequence belongs to the krueppel C2H2-type zinc-finger protein family.

The protein resides in the nucleus. May be involved in transcriptional regulation. In Bos taurus (Bovine), this protein is Zinc finger protein 512 (ZNF512).